The primary structure comprises 171 residues: UPF0303 protein YPK_1581 (171 aa).

Belongs to the UPF0303 family.

This is UPF0303 protein YPK_1581 from Yersinia pseudotuberculosis serotype O:3 (strain YPIII).